Consider the following 372-residue polypeptide: Queuine tRNA-ribosyltransferase (372 aa).

Asp92 acts as the Proton acceptor in catalysis. Substrate contacts are provided by residues 92–96 (DSGGF), Asp146, Gln188, and Gly215. An RNA binding region spans residues 246 to 252 (GIGTLRE). Catalysis depends on Asp265, which acts as the Nucleophile. An RNA binding; important for wobble base 34 recognition region spans residues 270-274 (TRLGR). Residues Cys303, Cys305, Cys308, and His334 each contribute to the Zn(2+) site.

This sequence belongs to the queuine tRNA-ribosyltransferase family. As to quaternary structure, homodimer. Within each dimer, one monomer is responsible for RNA recognition and catalysis, while the other monomer binds to the replacement base PreQ1. The cofactor is Zn(2+).

It carries out the reaction 7-aminomethyl-7-carbaguanine + guanosine(34) in tRNA = 7-aminomethyl-7-carbaguanosine(34) in tRNA + guanine. Its pathway is tRNA modification; tRNA-queuosine biosynthesis. Catalyzes the base-exchange of a guanine (G) residue with the queuine precursor 7-aminomethyl-7-deazaguanine (PreQ1) at position 34 (anticodon wobble position) in tRNAs with GU(N) anticodons (tRNA-Asp, -Asn, -His and -Tyr). Catalysis occurs through a double-displacement mechanism. The nucleophile active site attacks the C1' of nucleotide 34 to detach the guanine base from the RNA, forming a covalent enzyme-RNA intermediate. The proton acceptor active site deprotonates the incoming PreQ1, allowing a nucleophilic attack on the C1' of the ribose to form the product. After dissociation, two additional enzymatic reactions on the tRNA convert PreQ1 to queuine (Q), resulting in the hypermodified nucleoside queuosine (7-(((4,5-cis-dihydroxy-2-cyclopenten-1-yl)amino)methyl)-7-deazaguanosine). This is Queuine tRNA-ribosyltransferase from Prochlorococcus marinus (strain MIT 9303).